A 397-amino-acid chain; its full sequence is Phosphoglycerate kinase (397 aa).

Residues D21–N23, R37, H60–R63, R119, and R152 contribute to the substrate site. ATP is bound by residues K203, G294, E325, and G354–S357.

It belongs to the phosphoglycerate kinase family. As to quaternary structure, monomer.

It is found in the cytoplasm. It carries out the reaction (2R)-3-phosphoglycerate + ATP = (2R)-3-phospho-glyceroyl phosphate + ADP. Its pathway is carbohydrate degradation; glycolysis; pyruvate from D-glyceraldehyde 3-phosphate: step 2/5. The chain is Phosphoglycerate kinase from Chlorobium limicola (strain DSM 245 / NBRC 103803 / 6330).